The chain runs to 436 residues: Gamma-glutamyl phosphate reductase (436 aa).

This sequence belongs to the gamma-glutamyl phosphate reductase family.

It localises to the cytoplasm. The enzyme catalyses L-glutamate 5-semialdehyde + phosphate + NADP(+) = L-glutamyl 5-phosphate + NADPH + H(+). Its pathway is amino-acid biosynthesis; L-proline biosynthesis; L-glutamate 5-semialdehyde from L-glutamate: step 2/2. Its function is as follows. Catalyzes the NADPH-dependent reduction of L-glutamate 5-phosphate into L-glutamate 5-semialdehyde and phosphate. The product spontaneously undergoes cyclization to form 1-pyrroline-5-carboxylate. This is Gamma-glutamyl phosphate reductase from Salinibacter ruber (strain DSM 13855 / M31).